A 151-amino-acid polypeptide reads, in one-letter code: UPF0178 protein YaiI (151 aa).

This sequence belongs to the UPF0178 family.

This Salmonella agona (strain SL483) protein is UPF0178 protein YaiI.